The following is a 451-amino-acid chain: Glyceraldehyde-3-phosphate dehydrogenase B, chloroplastic (451 aa).

The interval 1–25 (MATHAALASTRIPTNTRFPSKTSHS) is disordered. The transit peptide at 1 to 84 (MATHAALAST…STAVKGVTVA (84 aa)) directs the protein to the chloroplast. The segment covering 11 to 25 (RIPTNTRFPSKTSHS) has biased composition (polar residues). NADP(+)-binding positions include 95 to 96 (RI), Asp-119, and Arg-164. D-glyceraldehyde 3-phosphate-binding positions include 238–240 (SCT), Thr-269, Arg-284, 297–298 (TG), and Arg-320. The active-site Nucleophile is the Cys-239. Residue Asn-403 coordinates NADP(+).

Belongs to the glyceraldehyde-3-phosphate dehydrogenase family. Tetramer of either four A chains (GAPDH 2) or two A and two B chains (GAPDH 1).

The protein resides in the plastid. It localises to the chloroplast. The catalysed reaction is D-glyceraldehyde 3-phosphate + phosphate + NADP(+) = (2R)-3-phospho-glyceroyl phosphate + NADPH + H(+). The protein operates within carbohydrate biosynthesis; Calvin cycle. The chain is Glyceraldehyde-3-phosphate dehydrogenase B, chloroplastic (GAPB) from Pisum sativum (Garden pea).